Here is a 151-residue protein sequence, read N- to C-terminus: MYAIIRLRGEVNTKPAIRDTLSMLRLHRVNHCVFVREDEHYRGMIQVVKDYVAWGKADADLLTMILEKRGRLSGNRRLTDEVVREISPYKSIRELAEAVCAGAASLKDFGIKPVFRLHPPRKGHRGIKKTVKEGGELGYHESIAELIKKMR.

The protein belongs to the universal ribosomal protein uL30 family. As to quaternary structure, part of the 50S ribosomal subunit.

The protein is Large ribosomal subunit protein uL30 of Methanothrix thermoacetophila (strain DSM 6194 / JCM 14653 / NBRC 101360 / PT) (Methanosaeta thermophila).